The primary structure comprises 1043 residues: Peroxisomal ATPase PEX1 (1043 aa).

The segment at 453-626 is AAA-cassette D1; that stretch reads ATPAIILDGK…SKNQIMKLNR (174 aa). ATP contacts are provided by residues 461–468 and 738–745; these read GKQGIGKT and GYPGCGKT. The interval 733-926 is AAA-cassette D2; the sequence is GILLYGYPGC…CYNAYLKSVH (194 aa).

The protein belongs to the AAA ATPase family. Interacts with PEX6; forming the PEX1-PEX6 AAA ATPase complex, which is composed of a heterohexamer formed by a trimer of PEX1-PEX6 dimers. The PEX1-PEX6 heterooligomers associate with the peroxisomal importomer via interaction of PEX6 with the peroxisomal membrane anchor PEX15.

It localises to the cytoplasm. It is found in the cytosol. The protein localises to the peroxisome membrane. It catalyses the reaction ATP + H2O = ADP + phosphate + H(+). Component of the PEX1-PEX6 AAA ATPase complex, a protein dislocase complex that mediates the ATP-dependent extraction of the PEX5 receptor from peroxisomal membranes, an essential step for PEX5 recycling. Specifically recognizes PEX5 monoubiquitinated at 'Cys-6', and pulls it out of the peroxisome lumen through the PEX2-PEX10-PEX12 retrotranslocation channel. Extraction by the PEX1-PEX6 AAA ATPase complex is accompanied by unfolding of the TPR repeats and release of bound cargo from PEX5. This chain is Peroxisomal ATPase PEX1, found in Saccharomyces cerevisiae (strain ATCC 204508 / S288c) (Baker's yeast).